The sequence spans 419 residues: UDP-N-acetylglucosamine 1-carboxyvinyltransferase 2 (419 aa).

Position 22–23 (22–23 (KN)) interacts with phosphoenolpyruvate. R92 lines the UDP-N-acetyl-alpha-D-glucosamine pocket. Catalysis depends on C116, which acts as the Proton donor. At C116 the chain carries 2-(S-cysteinyl)pyruvic acid O-phosphothioketal. UDP-N-acetyl-alpha-D-glucosamine contacts are provided by residues 121–125 (RPIDL), D306, and I328.

Belongs to the EPSP synthase family. MurA subfamily.

Its subcellular location is the cytoplasm. The enzyme catalyses phosphoenolpyruvate + UDP-N-acetyl-alpha-D-glucosamine = UDP-N-acetyl-3-O-(1-carboxyvinyl)-alpha-D-glucosamine + phosphate. It functions in the pathway cell wall biogenesis; peptidoglycan biosynthesis. In terms of biological role, cell wall formation. Adds enolpyruvyl to UDP-N-acetylglucosamine. In Streptococcus pneumoniae (strain ATCC BAA-255 / R6), this protein is UDP-N-acetylglucosamine 1-carboxyvinyltransferase 2.